The following is a 405-amino-acid chain: Double C2-like domain-containing protein alpha (405 aa).

Residues 1–94 are interaction with UNC13D and DYNLT1; the sequence is MRGRRGDRMT…DSYDSDDTTA (94 aa). Residues 34–54 form a disordered region; that stretch reads DYFPRRGPGPEGGGGGGGTGC. Gly residues predominate over residues 42-54; sequence GPEGGGGGGGTGC. C2 domains follow at residues 94-216 and 256-389; these read ALGT…HFNI and ERGR…ERWH. Positions 125, 131, 186, 188, 287, 293, 347, 349, and 355 each coordinate Ca(2+). An interaction with UNC13D region spans residues 220-405; that stretch reads RQVPLPSPSS…PPAAGAYPLA (186 aa).

Interacts (via N-terminus) with UNC13A. Interacts with cytoplasmic dynein light chain DYNLT1. Interacts with UNC13D. Ca(2+) is required as a cofactor. As to expression, brain and mast cells.

It is found in the cytoplasmic vesicle. The protein resides in the secretory vesicle. The protein localises to the synaptic vesicle membrane. It localises to the synapse. Its subcellular location is the synaptosome. It is found in the lysosome. Its function is as follows. Calcium sensor which most probably regulates fusion of vesicles with membranes. Binds calcium and phospholipids. May be involved in calcium dependent neurotransmitter release through the interaction with UNC13A. May be involved in calcium-dependent spontaneous release of neurotransmitter in absence of action potentials in neuronal cells. Regulates Ca(2+)-dependent secretory lysosome exocytosis in mast cells. This is Double C2-like domain-containing protein alpha (Doc2a) from Mus musculus (Mouse).